The primary structure comprises 587 residues: Polyphenol oxidase E, chloroplastic (587 aa).

A chloroplast-targeting transit peptide spans 1–87 (MSSSSSITTT…AANLAPLATA (87 aa)). 2 cysteine pairs are disulfide-bonded: C98–C114 and C113–C180. The Cu cation site is built by H179, H197, H206, H328, H332, and H363. The 2'-(S-cysteinyl)-histidine (Cys-His) cross-link spans 183 to 197 (CNGAYKVGGKELQVH).

Belongs to the tyrosinase family. Cu(2+) is required as a cofactor.

The protein resides in the plastid. It localises to the chloroplast thylakoid lumen. It catalyses the reaction 2 catechol + O2 = 2 1,2-benzoquinone + 2 H2O. Catalyzes the oxidation of mono- and o-diphenols to o-diquinones. The chain is Polyphenol oxidase E, chloroplastic from Solanum lycopersicum (Tomato).